A 241-amino-acid polypeptide reads, in one-letter code: UDP-2,3-diacylglucosamine hydrolase (241 aa).

5 residues coordinate Mn(2+): aspartate 8, histidine 10, aspartate 41, asparagine 79, and histidine 114. Position 79–80 (79–80 (NR)) interacts with substrate. Substrate is bound by residues aspartate 122, serine 160, asparagine 164, lysine 167, and histidine 195. Positions 195 and 197 each coordinate Mn(2+).

The protein belongs to the LpxH family. Mn(2+) serves as cofactor.

It is found in the cell inner membrane. The catalysed reaction is UDP-2-N,3-O-bis[(3R)-3-hydroxytetradecanoyl]-alpha-D-glucosamine + H2O = 2-N,3-O-bis[(3R)-3-hydroxytetradecanoyl]-alpha-D-glucosaminyl 1-phosphate + UMP + 2 H(+). Its pathway is glycolipid biosynthesis; lipid IV(A) biosynthesis; lipid IV(A) from (3R)-3-hydroxytetradecanoyl-[acyl-carrier-protein] and UDP-N-acetyl-alpha-D-glucosamine: step 4/6. Functionally, hydrolyzes the pyrophosphate bond of UDP-2,3-diacylglucosamine to yield 2,3-diacylglucosamine 1-phosphate (lipid X) and UMP by catalyzing the attack of water at the alpha-P atom. Involved in the biosynthesis of lipid A, a phosphorylated glycolipid that anchors the lipopolysaccharide to the outer membrane of the cell. In Aeromonas hydrophila subsp. hydrophila (strain ATCC 7966 / DSM 30187 / BCRC 13018 / CCUG 14551 / JCM 1027 / KCTC 2358 / NCIMB 9240 / NCTC 8049), this protein is UDP-2,3-diacylglucosamine hydrolase.